A 620-amino-acid chain; its full sequence is MPKLRSATSTQGRNMAGARALWRATGMTDGDFGKPIIAVVNSFTQFVPGHVHLKDMGQLVAGAIEEAGGVAKEFNTIAVDDGIAMGHSGMLYSLPSRDLIADSVEYMVNAHCADAMVCISNCDKITPGMMMAAMRLNIPVIFVSGGPMEAGKTKLSDQIIKLDLVDAMIKGADPTVSDEDSDKIERSACPTCGSCSGMFTANSMNCLAEALGLALPGNGSMLATHADREQLFLKAGKQIVELTKRYYQDNDESALPRNIACKEALHNAMCLDIAMGGSTNTILHLLATAQEAEIDYTMEDMDKLSRIVPQLCKVAPSTPEYHMEDVHRAGGVISILGELSRAGLLKTDVPNVLGTTLADVIAKYDITLTDDEDIKKFYRAGPAGIRTTKAFSQDCRWDTLDDDRVNGCIRNLENAFSLEGGLAVLSGNIAVDGCVVKTAGVSDDNLVFTGPAHIFESQDDAVAGVLDGKVVAGEVVVIRYEGPKGGPGMQEMLYPTTYLKSMGLGKACALLTDGRFSGGTSGLSIGHVSPEAADGGTIALVEQGDIIHIDIPTREITLQVSEEVLEERRAAMISKGKQAWKPADRVRPISYALKNYAMLATSADKGAVRNRDLLDGLVDK.

Asp81 contributes to the Mg(2+) binding site. Cys122 contributes to the [2Fe-2S] cluster binding site. The Mg(2+) site is built by Asp123 and Lys124. At Lys124 the chain carries N6-carboxylysine. Cys195 lines the [2Fe-2S] cluster pocket. Mg(2+) is bound at residue Glu491. Residue Ser517 is the Proton acceptor of the active site.

Belongs to the IlvD/Edd family. Homodimer. [2Fe-2S] cluster serves as cofactor. The cofactor is Mg(2+).

It catalyses the reaction (2R)-2,3-dihydroxy-3-methylbutanoate = 3-methyl-2-oxobutanoate + H2O. The catalysed reaction is (2R,3R)-2,3-dihydroxy-3-methylpentanoate = (S)-3-methyl-2-oxopentanoate + H2O. It participates in amino-acid biosynthesis; L-isoleucine biosynthesis; L-isoleucine from 2-oxobutanoate: step 3/4. It functions in the pathway amino-acid biosynthesis; L-valine biosynthesis; L-valine from pyruvate: step 3/4. Functionally, functions in the biosynthesis of branched-chain amino acids. Catalyzes the dehydration of (2R,3R)-2,3-dihydroxy-3-methylpentanoate (2,3-dihydroxy-3-methylvalerate) into 2-oxo-3-methylpentanoate (2-oxo-3-methylvalerate) and of (2R)-2,3-dihydroxy-3-methylbutanoate (2,3-dihydroxyisovalerate) into 2-oxo-3-methylbutanoate (2-oxoisovalerate), the penultimate precursor to L-isoleucine and L-valine, respectively. The protein is Dihydroxy-acid dehydratase of Colwellia psychrerythraea (strain 34H / ATCC BAA-681) (Vibrio psychroerythus).